The chain runs to 332 residues: Homeobox protein DLX-2 (332 aa).

Residues 19-28 (ASSTYHQHQQ) are compositionally biased toward polar residues. Residues 19-83 (ASSTYHQHQQ…QHPAGGGGGG (65 aa)) form a disordered region. The span at 40-49 (NSNSSSSNSS) shows a compositional bias: low complexity. The span at 55–75 (ESPTLPVSTATDSSYYTNQQH) shows a compositional bias: polar residues. The segment at residues 155–214 (VRKPRTIYSSFQLAALQRRFQKTQYLALPERAELAASLGLTQTQVKIWFQNRRSKFKKMW) is a DNA-binding region (homeobox). Disordered regions lie at residues 219–272 (IPTE…SSPS) and 304–332 (PSQT…GTIF). Ser-235 is modified (phosphoserine). The span at 253 to 266 (AGGGPGSGGGGAGS) shows a compositional bias: gly residues. Positions 310–320 (AHHHHHHHHHA) are enriched in basic residues.

The protein belongs to the distal-less homeobox family. In terms of assembly, interacts (via homeobox DNA-binding domain) with POU4F2; this interaction enhances retinal ganglion cell (RGC) differentiation. Phosphorylated by serine/threonine kinases. Expressed only in neural and other ectodermal structures of the head: the brain, the vomeronasal organ, and the preameloblasts of the teeth. Primarily expressed in the germinal cells of the ventral forebrain in the midgestational embryo, and in both dorsal and ventral ventricular zones in late embryogenesis and early postnatal life. Expressed in the inner nuclear layer of the retina.

Its subcellular location is the nucleus. Acts as a transcriptional activator. Activates transcription of CGA/alpha-GSU, via binding to the downstream activin regulatory element (DARE) in the gene promoter. Plays a role in terminal differentiation of interneurons, such as amacrine and bipolar cells in the developing retina. Likely to play a regulatory role in the development of the ventral forebrain. May play a role in craniofacial patterning and morphogenesis. In Mus musculus (Mouse), this protein is Homeobox protein DLX-2 (Dlx2).